The chain runs to 467 residues: MAP kinase-interacting serine/threonine-protein kinase 2 (467 aa).

The region spanning 83–367 is the Protein kinase domain; that stretch reads QLQQEILGEG…AAQVLQHPWV (285 aa). Residues 89–97 and K112 each bind ATP; that span reads LGEGAYAKV. The active-site Proton acceptor is D204. The Zn(2+) site is built by C298, C310, and C313. The segment at 432–467 is disordered; the sequence is MQLSPPSESKLAKRRQQGSKGGISPPSLAPLLIVSD.

The protein belongs to the protein kinase superfamily. CAMK Ser/Thr protein kinase family. Mg(2+) is required as a cofactor. Requires Zn(2+) as cofactor.

The enzyme catalyses L-seryl-[protein] + ATP = O-phospho-L-seryl-[protein] + ADP + H(+). The catalysed reaction is L-threonyl-[protein] + ATP = O-phospho-L-threonyl-[protein] + ADP + H(+). Its function is as follows. May play a role in the response to environmental stress and cytokines. Appears to regulate translation by phosphorylating EIF4E, thus increasing the affinity of this protein for the 7-methylguanosine-containing mRNA cap. This Xenopus laevis (African clawed frog) protein is MAP kinase-interacting serine/threonine-protein kinase 2 (mknk2).